Here is a 446-residue protein sequence, read N- to C-terminus: Packaging protein 1 (446 aa).

A disordered region spans residues 1-72 (MEEKAGLRHL…SQVSKSKKQR (72 aa)). Over residues 10–21 (LQNQQNEPSQDP) the composition is skewed to polar residues. Residues 32–43 (HSDRNHLNKEAE) show a composition bias toward basic and acidic residues. 170-177 (GPTGCGKS) is an ATP binding site. A DNA-binding region spans residues 439–446 (RYYHSKKK).

The protein belongs to the adenoviridae packaging protein 1 family. Homodimer. Part of a genome packaging complex composed of packaging proteins 1, 2 and 3; this complex specifically binds to the packaging sequence on the left end of viral genomic DNA and performs packaging of the viral genome. Interacts with protein 33K.

Its subcellular location is the virion. It is found in the host nucleus. It localises to the host nucleoplasm. The protein localises to the host nucleolus. In terms of biological role, component of the packaging machinery which encapsidates the viral DNA into preformed capsids and transcriptional activator of the viral major late promoter (MLP). Binds, along with packaging proteins 2 and 3, to the specific packaging sequence on the left end of viral genomic DNA and displays ATPase activity thereby providing the power stroke of the packaging machinery. The activity of packaging protein IVa2 is stimulated by protein 33K which acts as a terminase. May be the protein that pumps DNA into the capsid powered by ATP hydrolysis. Specifically binds to the 5'-CG-3' nucleotides of the repeats making up the packaging sequence. Component of the DEF-A and DEF-B transcription factors that bind downstream elements of the major late promoter (MLP), and stimulate transcription from the MLP after initiation of viral DNA replication. DEF-A is a heterodimer packaging proteins 1 and 2 and DEF-B is a homodimer of packaging protein 1. The polypeptide is Packaging protein 1 (Canine adenovirus serotype 1 (strain CLL) (CAdV-1)).